The chain runs to 490 residues: Cobyric acid synthase (490 aa).

The region spanning 252-439 (RLKVVVPVLP…LHGLFESTAA (188 aa)) is the GATase cobBQ-type domain. The Nucleophile role is filled by cysteine 333. Residue histidine 431 is part of the active site.

The protein belongs to the CobB/CobQ family. CobQ subfamily.

It functions in the pathway cofactor biosynthesis; adenosylcobalamin biosynthesis. In terms of biological role, catalyzes amidations at positions B, D, E, and G on adenosylcobyrinic A,C-diamide. NH(2) groups are provided by glutamine, and one molecule of ATP is hydrogenolyzed for each amidation. The polypeptide is Cobyric acid synthase (Pseudomonas aeruginosa (strain UCBPP-PA14)).